The following is a 412-amino-acid chain: Alpha-ketoglutarate-dependent sulfonate dioxygenase (412 aa).

Phosphoserine is present on Ser-52. His-218 and Asp-220 together coordinate Fe cation. 2-oxoglutarate contacts are provided by Thr-245 and Trp-352. Residue His-367 participates in Fe cation binding. Arg-379 and Arg-383 together coordinate 2-oxoglutarate.

Belongs to the TfdA dioxygenase family. It depends on Fe(2+) as a cofactor.

It functions in the pathway organosulfur degradation; alkanesulfonate degradation. Functionally, acts as an alpha-ketoglutarate-dependent dioxygenase active on sulfonates. Although taurine is a poor substrate, a variety of other sulfonates are utilized, with the best natural substrates being isethionate and taurocholate. The protein is Alpha-ketoglutarate-dependent sulfonate dioxygenase (JLP1) of Saccharomyces cerevisiae (strain ATCC 204508 / S288c) (Baker's yeast).